Consider the following 299-residue polypeptide: GTPase Era (299 aa).

The 171-residue stretch at 5 to 175 (RSGFVCFVGR…TDVLAGKLPP (171 aa)) folds into the Era-type G domain. The G1 stretch occupies residues 13–20 (GRPNTGKS). 13 to 20 (GRPNTGKS) contributes to the GTP binding site. The segment at 39–43 (QTTRH) is G2. Residues 60–63 (DTPG) are G3. GTP contacts are provided by residues 60–64 (DTPGL) and 124–127 (TKID). A G4 region spans residues 124-127 (TKID). The tract at residues 154 to 156 (VSA) is G5. In terms of domain architecture, KH type-2 spans 206-285 (VRDELPHSLA…YLDLRVKIAK (80 aa)).

Belongs to the TRAFAC class TrmE-Era-EngA-EngB-Septin-like GTPase superfamily. Era GTPase family. As to quaternary structure, monomer.

It is found in the cell envelope. The protein localises to the secreted. The protein resides in the cell wall. Its function is as follows. Exhibits GTPase activity. Binds RNA but is probably not involved in ribosome assembly in mycobacteria. The sequence is that of GTPase Era from Mycobacterium sp. (strain JLS).